The chain runs to 539 residues: MLRLARPLCVQTVKASKLSRLWSRPAALMSTLLIHHPQYAWLQDLGLREDNEGVFNGSWGGRGEVITTYCPANNEPIARVRQASMKDYEETIGKAKKAWNIWADIPAPKRGEIVRKIGDALREKIQLLGRLVSLEMGKILVEGIGEVQEYVDVCDYAAGLSRMIGGPTLPSERPGHALMEQWNPLGLVGIITAFNFPVAVFGWNNAIALITGNVCLWKGAPTTSLVSIAVTKIIAKVLEDNLLPGAICSLTCGGADMGTAMARDERVNLLSFTGSTQVGKQVALMVQERFGKSLLELGGNNAIIAFEDADLSLVLPSALFAAVGTAGQRCTTVRRLFLHESIHDEVVDRLKNAYSQIRVGNPWDPNILYGPLHTKQAVSMFVQAVEEAKKEGGTVVYGGKVMDHPGNYVEPTIVTGLVHDAPIVHKETFAPILYVFKFKNEEEVFEWNNEVKQGLSSSIFTKDLGRIFRWLGPKGSDCGIVNVNIPTSGAEIGGAFGGEKHTGGGRESGSDAWKQYMRRSTCTINYSTALPLAQGIKFQ.

A mitochondrion-targeting transit peptide spans 1–26 (MLRLARPLCVQTVKASKLSRLWSRPA). An N6-acetyllysine; alternate mark is found at Lys86, Lys94, and Lys97. N6-succinyllysine; alternate is present on residues Lys86, Lys94, and Lys97. NAD(+)-binding positions include 192 to 194 (TAF), Lys218, 258 to 259 (GT), 274 to 275 (GS), 274 to 279 (GSTQVG), and 296 to 297 (EL). Glu296 (proton acceptor) is an active-site residue. The active-site Nucleophile is Cys330. (S)-2-amino-6-oxohexanoate is bound at residue Thr331. An NAD(+)-binding site is contributed by Glu427. N6-acetyllysine is present on Lys462. Residues Gly489 and Ala490 each contribute to the (S)-2-amino-6-oxohexanoate site. Lys500 is modified (N6-acetyllysine). Lys537 carries the post-translational modification N6-succinyllysine.

This sequence belongs to the aldehyde dehydrogenase family. Homotetramer. Abundant in kidney, liver, cochlea and outer hair cells but not inner hair cells or vestibular type I hair cells. Very low levels in lung, brain, intestine and pancreas.

It is found in the cytoplasm. Its subcellular location is the cytosol. The protein resides in the nucleus. The protein localises to the mitochondrion. It carries out the reaction nonanal + NAD(+) + H2O = nonanoate + NADH + 2 H(+). The enzyme catalyses (S)-2-amino-6-oxohexanoate + NAD(+) + H2O = L-2-aminoadipate + NADH + 2 H(+). The catalysed reaction is betaine aldehyde + NAD(+) + H2O = glycine betaine + NADH + 2 H(+). It catalyses the reaction an aldehyde + NAD(+) + H2O = a carboxylate + NADH + 2 H(+). It carries out the reaction hexanal + NAD(+) + H2O = hexanoate + NADH + 2 H(+). The enzyme catalyses octanal + NAD(+) + H2O = octanoate + NADH + 2 H(+). The catalysed reaction is (E)-non-2-enal + NAD(+) + H2O = (E)-non-2-enoate + NADH + 2 H(+). It catalyses the reaction (E)-4-hydroxynon-2-enal + NAD(+) + H2O = (E)-4-hydroxynon-2-enoate + NADH + 2 H(+). The protein operates within amine and polyamine biosynthesis; betaine biosynthesis via choline pathway; betaine from betaine aldehyde: step 1/1. In terms of biological role, multifunctional enzyme mediating important protective effects. Metabolizes betaine aldehyde to betaine, an important cellular osmolyte and methyl donor. Protects cells from oxidative stress by metabolizing a number of lipid peroxidation-derived aldehydes. Involved in lysine catabolism. This Rattus norvegicus (Rat) protein is Alpha-aminoadipic semialdehyde dehydrogenase.